Here is a 608-residue protein sequence, read N- to C-terminus: Protoheme IX farnesyltransferase (608 aa).

A COX15/CtaA region spans residues 1 to 338 (MKTPAWSRLA…DYLALTKPRV (338 aa)). Transmembrane regions (helical) follow at residues 10 to 30 (AGYAWGVLLWNVLVALFGAYV), 67 to 87 (ATSGLAFLSVLALFLWALRAF), 99 to 119 (LALFFMVTESLVGASLVLFGW), 139 to 159 (TYFLLAALALTAWWASGGGPL), 167 to 187 (VGLALFLGLLALLFLGMSGAV), 220 to 240 (VLHPLIAVSVGLYVVFAGYLV), 252 to 272 (LAQGLAYLYGAQLLAGLINVA), 277 to 297 (VWMQILHLLLAYAIWLLFVFL), 338 to 357 (VISLLLFTALFGALIAAKGW), 362 to 384 (VFLAVALGGYMMAGAANAINMVV), 411 to 431 (LLFAFALAVLGFAVLWWGANL), 432 to 452 (LAATLALMGLIWYVLVYTLYL), 460 to 480 (IVIGGAAGAFPPLVGWAAVTG), 488 to 508 (YLFALIFFWTPVHFWALALMI), 530 to 550 (VIQIALYALLTALISLMPLLL), 555 to 575 (LLYLAASLLLNALLLLKSLAL), and 584 to 604 (AVSLYKYSMLYLALLFAAMAV). Residues 339–608 (ISLLLFTALF…FAAMAVDRAV (270 aa)) are protoheme IX prenyltransferase.

It in the N-terminal section; belongs to the COX15/CtaA family. In the C-terminal section; belongs to the UbiA prenyltransferase family. Protoheme IX farnesyltransferase subfamily.

It localises to the cell inner membrane. The catalysed reaction is heme b + (2E,6E)-farnesyl diphosphate + H2O = Fe(II)-heme o + diphosphate. The protein operates within porphyrin-containing compound metabolism; heme O biosynthesis; heme O from protoheme: step 1/1. Its function is as follows. Converts heme B (protoheme IX) to heme O by substitution of the vinyl group on carbon 2 of heme B porphyrin ring with a hydroxyethyl farnesyl side group. The chain is Protoheme IX farnesyltransferase (ctaB) from Thermus thermophilus (strain ATCC 27634 / DSM 579 / HB8).